Consider the following 1037-residue polypeptide: Multidrug resistance protein MdtF (1037 aa).

The Cytoplasmic portion of the chain corresponds to 1-9; sequence MANYFIDRP. Residues 10-30 form a helical membrane-spanning segment; it reads VFAWVLAIIMMLAGGLAIMNL. Residues 31–338 are Periplasmic-facing; sequence PVAQYPQIAP…TTPFIEISIQ (308 aa). The chain crosses the membrane as a helical span at residues 339 to 359; sequence EVFKTLVEAIILVFLVMYLFL. The Cytoplasmic segment spans residues 360–369; sequence QNFRATIIPT. The helical transmembrane segment at 370-390 threads the bilayer; it reads IAVPVVILGTFAILSAVGFTI. At 391–392 the chain is on the periplasmic side; that stretch reads NT. A helical membrane pass occupies residues 393 to 413; it reads LTMFGMVLAIGLLVDDAIVVV. Residues 414 to 441 are Cytoplasmic-facing; the sequence is ENVERVIAEDKLPPKEATHKSMGQIQRA. The chain crosses the membrane as a helical span at residues 442–462; it reads LVGIAVVLSAVFMPMAFMSGA. The Periplasmic segment spans residues 463–471; it reads TGEIYRQFS. Residues 472–492 traverse the membrane as a helical segment; it reads ITLISSMLLSVFVAMSLTPAL. The Cytoplasmic segment spans residues 493 to 534; sequence CATILKAAPEGGHKPNALFARFNTLFEKSTQHYTDSTRSLLR. Residues 535-555 form a helical membrane-spanning segment; that stretch reads CTGRYMVIYLLICAGMAVLFL. At 556 to 870 the chain is on the periplasmic side; it reads RTPTSFLPEE…SYQEALSSNQ (315 aa). A helical transmembrane segment spans residues 871 to 891; that stretch reads APALYAISLVVVFLALAALYE. Residue Ser-892 is a topological domain, cytoplasmic. Residues 893-913 traverse the membrane as a helical segment; it reads WSIPFSVMLVVPLGVVGALLA. Topologically, residues 914 to 927 are periplasmic; the sequence is TDLRGLSNDVYFQV. Residues 928–948 form a helical membrane-spanning segment; that stretch reads GLLTTIGLSAKNAILIVEFAV. Residues 949-972 lie on the Cytoplasmic side of the membrane; that stretch reads EMMQKEGKTPIEAIIEAARMRLRP. The helical transmembrane segment at 973 to 993 threads the bilayer; it reads ILMTSLAFILGVLPLVISHGA. Over 994–1006 the chain is Periplasmic; sequence GSGAQNAVGTGVM. Residues 1007 to 1027 traverse the membrane as a helical segment; that stretch reads GGMFAATVLAIYFVPVFFVVV. Over 1028 to 1037 the chain is Cytoplasmic; that stretch reads EHLFARFKKA.

The protein belongs to the resistance-nodulation-cell division (RND) (TC 2.A.6) family. As to quaternary structure, homotrimer. Part of the tripartite efflux system MdtEF-TolC, which is composed of an inner membrane transporter, MdtF, a membrane fusion protein, MdtE, and an outer membrane component, TolC. The complex forms a large protein conduit and can translocate molecules across both the inner and outer membranes.

The protein resides in the cell inner membrane. Part of the tripartite efflux system MdtEF-TolC, which confers resistance to various compounds. This Escherichia coli O157:H7 protein is Multidrug resistance protein MdtF (mdtF).